A 252-amino-acid polypeptide reads, in one-letter code: Imidazole glycerol phosphate synthase subunit HisF (252 aa).

Catalysis depends on residues aspartate 11 and aspartate 130.

It belongs to the HisA/HisF family. In terms of assembly, heterodimer of HisH and HisF.

Its subcellular location is the cytoplasm. The catalysed reaction is 5-[(5-phospho-1-deoxy-D-ribulos-1-ylimino)methylamino]-1-(5-phospho-beta-D-ribosyl)imidazole-4-carboxamide + L-glutamine = D-erythro-1-(imidazol-4-yl)glycerol 3-phosphate + 5-amino-1-(5-phospho-beta-D-ribosyl)imidazole-4-carboxamide + L-glutamate + H(+). It participates in amino-acid biosynthesis; L-histidine biosynthesis; L-histidine from 5-phospho-alpha-D-ribose 1-diphosphate: step 5/9. Functionally, IGPS catalyzes the conversion of PRFAR and glutamine to IGP, AICAR and glutamate. The HisF subunit catalyzes the cyclization activity that produces IGP and AICAR from PRFAR using the ammonia provided by the HisH subunit. The sequence is that of Imidazole glycerol phosphate synthase subunit HisF from Bacillus cereus (strain ATCC 10987 / NRS 248).